Here is a 614-residue protein sequence, read N- to C-terminus: Putative amino acid transporter AAT1 (614 aa).

The next 11 helical transmembrane spans lie at 184 to 216 (VLFL…LILL), 222 to 243 (YITT…YGNL), 255 to 275 (LIDF…LILV), 295 to 311 (RIFI…PLTF), 318 to 340 (INCF…GYQS), 360 to 380 (HFFK…NACF), 401 to 417 (ILIQ…LGYL), 437 to 459 (SILL…NFIA), 531 to 547 (CAAI…EFNV), 553 to 575 (FIGI…LIYY), and 587 to 613 (RYAT…FIII).

The protein belongs to the amino acid/polyamine transporter 2 family.

The protein resides in the vacuole membrane. Its function is as follows. Putative amino acid transporter. Involved in maintaining the osmotic homeostasis of the digestive vacuole. Important for the timely development and growth of the asexual-stage parasites and male gametocyte maturation. In Plasmodium berghei (strain Anka), this protein is Putative amino acid transporter AAT1.